The primary structure comprises 158 residues: Ribosome maturation factor RimP (158 aa).

It belongs to the RimP family.

The protein localises to the cytoplasm. Required for maturation of 30S ribosomal subunits. This chain is Ribosome maturation factor RimP, found in Pseudomonas fluorescens (strain ATCC BAA-477 / NRRL B-23932 / Pf-5).